Reading from the N-terminus, the 318-residue chain is Methionyl-tRNA formyltransferase (318 aa).

112–115 is a (6S)-5,6,7,8-tetrahydrofolate binding site; sequence SILP.

Belongs to the Fmt family.

The catalysed reaction is L-methionyl-tRNA(fMet) + (6R)-10-formyltetrahydrofolate = N-formyl-L-methionyl-tRNA(fMet) + (6S)-5,6,7,8-tetrahydrofolate + H(+). In terms of biological role, attaches a formyl group to the free amino group of methionyl-tRNA(fMet). The formyl group appears to play a dual role in the initiator identity of N-formylmethionyl-tRNA by promoting its recognition by IF2 and preventing the misappropriation of this tRNA by the elongation apparatus. This chain is Methionyl-tRNA formyltransferase, found in Haemophilus influenzae (strain PittEE).